Consider the following 337-residue polypeptide: Oxidoreductase andH (337 aa).

Belongs to the NmrA-type oxidoreductase family.

Its pathway is secondary metabolite biosynthesis; terpenoid biosynthesis. Its function is as follows. Oxidoreductase; part of the gene cluster that mediates the biosynthesis of anditomin, a fungal meroterpenoid. The first step of the pathway is the synthesis of 3,5-dimethylorsellinic acid (DMOA) by the polyketide synthase andM. DMOA is then converted to the phthalide compound 5,7-dihydroxy-4,6-dimethylphthalide (DHDMP) by the cytochrome P450 monooxygenase andK, which is further prenylated by the prenyltransferase andD to yield farnesyl-DHDMP. Further epoxidation by the FAD-dependent monooxygenase andE leads to epoxyfarnesyl-DHDMP. The next step involves the terpene cyclase andB that converts epoxyfarnesyl-DHDMP into preandiloid A through opening of the epoxide ring followed by the cyclization of the farnesyl moiety. Preandiloid A is in turn oxidized at the C-3 hydroxyl group to yield preandiloid B by the dehydrogenase andC. The dioxygenase andA is solely responsible for the dehydrogenation of preandiloid B leading to the enone preandiloid C, as well as for the intriguing structural rearrangement to generate the bicyclo[2.2.2]octane core, transforming preandiloid C into andiconin. FAD-binding monooxygenase andJ then produces andilesin D which is reduced by dehydrogenase andI to yield andilesin A. Action of acetyltransferase andG followed by a spontaneous acetate elimination leads then to andilesin B, which is in turn substrate of the short chain dehydrogenase andH to yield andilesin C. Finally, the dioxygenase andF catalyzes the transformation of andilesin C to anditomin. This chain is Oxidoreductase andH, found in Emericella variicolor (Aspergillus stellatus).